The chain runs to 330 residues: Agamous-like MADS-box protein AGL75 (330 aa).

The MADS-box domain occupies 19 to 61; the sequence is TSLSNRLETIFKKASELCTLCDIEACVIYYGPDGELKTWPKEK.

In terms of assembly, interacts with MEE14/CBP1.

It is found in the nucleus. In terms of biological role, probable transcription factor that may function in the maintenance of the proper function of the central cell in pollen tube attraction. In Arabidopsis thaliana (Mouse-ear cress), this protein is Agamous-like MADS-box protein AGL75.